A 106-amino-acid chain; its full sequence is Iron-sulfur cluster assembly protein CyaY (106 aa).

The protein belongs to the frataxin family.

Involved in iron-sulfur (Fe-S) cluster assembly. May act as a regulator of Fe-S biogenesis. This chain is Iron-sulfur cluster assembly protein CyaY, found in Colwellia psychrerythraea (strain 34H / ATCC BAA-681) (Vibrio psychroerythus).